The primary structure comprises 78 residues: MSPLAHLLALPVRAYRLIFSPWVGYNCRYQPTCSAYALEALQKHGGLIGAWLTLRRILRCHPWGKCGYDPVPERTRKP.

The protein belongs to the UPF0161 family.

It localises to the cell inner membrane. In terms of biological role, could be involved in insertion of integral membrane proteins into the membrane. This Roseobacter denitrificans (strain ATCC 33942 / OCh 114) (Erythrobacter sp. (strain OCh 114)) protein is Putative membrane protein insertion efficiency factor.